The sequence spans 635 residues: 1-deoxy-D-xylulose-5-phosphate synthase (635 aa).

Thiamine diphosphate-binding positions include H78 and 119-121; that span reads GHS. D151 contacts Mg(2+). Thiamine diphosphate is bound by residues 152–153, N180, Y289, and E371; that span reads GA. Mg(2+) is bound at residue N180.

It belongs to the transketolase family. DXPS subfamily. Homodimer. Mg(2+) is required as a cofactor. The cofactor is thiamine diphosphate.

The catalysed reaction is D-glyceraldehyde 3-phosphate + pyruvate + H(+) = 1-deoxy-D-xylulose 5-phosphate + CO2. It participates in metabolic intermediate biosynthesis; 1-deoxy-D-xylulose 5-phosphate biosynthesis; 1-deoxy-D-xylulose 5-phosphate from D-glyceraldehyde 3-phosphate and pyruvate: step 1/1. Catalyzes the acyloin condensation reaction between C atoms 2 and 3 of pyruvate and glyceraldehyde 3-phosphate to yield 1-deoxy-D-xylulose-5-phosphate (DXP). This chain is 1-deoxy-D-xylulose-5-phosphate synthase, found in Bartonella tribocorum (strain CIP 105476 / IBS 506).